The primary structure comprises 89 residues: Small ribosomal subunit protein uS17 (89 aa).

Belongs to the universal ribosomal protein uS17 family. In terms of assembly, part of the 30S ribosomal subunit.

Its function is as follows. One of the primary rRNA binding proteins, it binds specifically to the 5'-end of 16S ribosomal RNA. The sequence is that of Small ribosomal subunit protein uS17 from Polaromonas naphthalenivorans (strain CJ2).